We begin with the raw amino-acid sequence, 216 residues long: Ribose-5-phosphate isomerase A (216 aa).

Residues 26–29, 79–82, and 92–95 each bind substrate; these read TGST, DGAD, and KGGG. Residue Glu-101 is the Proton acceptor of the active site. Lys-119 contacts substrate.

The protein belongs to the ribose 5-phosphate isomerase family. In terms of assembly, homodimer.

It carries out the reaction aldehydo-D-ribose 5-phosphate = D-ribulose 5-phosphate. Its pathway is carbohydrate degradation; pentose phosphate pathway; D-ribose 5-phosphate from D-ribulose 5-phosphate (non-oxidative stage): step 1/1. Functionally, catalyzes the reversible conversion of ribose-5-phosphate to ribulose 5-phosphate. This is Ribose-5-phosphate isomerase A from Legionella pneumophila subsp. pneumophila (strain Philadelphia 1 / ATCC 33152 / DSM 7513).